The sequence spans 263 residues: Auxin-responsive protein IAA3 (263 aa).

Disordered stretches follow at residues 1-54 (MSPP…RRPA) and 76-121 (RVFP…PAAK). The segment covering 28–38 (RADDVDLKGTE) has biased composition (basic and acidic residues). The EAR-like (transcriptional repression) signature appears at 39 to 43 (LRLGL). The PB1 domain maps to 158-245 (FLYVKVSMDG…SCRRLRIMKG (88 aa)).

Belongs to the Aux/IAA family. As to quaternary structure, homodimers and heterodimers. In terms of tissue distribution, highly expressed in flowers. Expressed in roots and shoots.

The protein resides in the nucleus. Its function is as follows. Aux/IAA proteins are short-lived transcriptional factors that function as repressors of early auxin response genes at low auxin concentrations. The sequence is that of Auxin-responsive protein IAA3 (IAA3) from Oryza sativa subsp. japonica (Rice).